Consider the following 250-residue polypeptide: Osmotin-like protein OSML15 (250 aa).

A signal peptide spans 1 to 21 (MSHLTTCLVFFLLAFVTYTNA). Intrachain disulfides connect Cys31-Cys226, Cys73-Cys83, Cys88-Cys94, Cys142-Cys214, Cys147-Cys197, Cys155-Cys165, Cys169-Cys178, and Cys179-Cys184.

Belongs to the thaumatin family.

The chain is Osmotin-like protein OSML15 from Solanum commersonii (Commerson's wild potato).